A 347-amino-acid polypeptide reads, in one-letter code: Heat-inducible transcription repressor HrcA (347 aa).

This sequence belongs to the HrcA family.

Functionally, negative regulator of class I heat shock genes (grpE-dnaK-dnaJ and groELS operons). Prevents heat-shock induction of these operons. The protein is Heat-inducible transcription repressor HrcA of Lactococcus lactis subsp. lactis (strain IL1403) (Streptococcus lactis).